The chain runs to 274 residues: Deoxyribonuclease TATDN3 (274 aa).

The Zn(2+) site is built by H12, H14, E107, H147, H170, and D218.

It belongs to the metallo-dependent hydrolases superfamily. TatD-type hydrolase family. The cofactor is Mn(2+). Ca(2+) serves as cofactor. It depends on Mg(2+) as a cofactor. Requires Zn(2+) as cofactor.

The protein localises to the nucleus. With respect to regulation, the 3'-exonuclease activity is sensitive to the metal ion present in the active site, whereas the AP endodeoxyribonuclease activity is observed in a variety of divalent metal cofactors. 3'-exoxonuclease activity is suppressed in the presence of Ca(2+), Zn(2+) and Ni(2+). Exhibits 3'-exonuclease activities and apurinic/apyrimidinic (AP) endonuclease (in vitro). Show preferential AP endonuclease activity on double-stranded DNA substrates and 3'- exonuclease activity on single-stranded DNA. This Homo sapiens (Human) protein is Deoxyribonuclease TATDN3 (TATDN3).